Consider the following 505-residue polypeptide: Alpha-internexin (505 aa).

The tract at residues 1–87 is head; that stretch reads MSFGSEHYLC…SQAAARTNEY (87 aa). Residue Ser72 is modified to Phosphoserine. The tract at residues 88–129 is coil 1A; it reads KIIRTNEKEQLQGLNDRFAVFIEKVHQLETQNRALEAELAAL. Residues 94-407 form the IF rod domain; it reads EKEQLQGLND…KLLEGEETRF (314 aa). The tract at residues 130-142 is linker 1; sequence RQRHAEPSRVGEL. Positions 143-238 are coil 1B; it reads FQRELRELRA…QVHDEEVAEL (96 aa). Residue Ser219 is modified to Phosphoserine. The segment at 239–262 is linker 2; that stretch reads LATLQASSQAAAEVDVAVAKPDLT. Residues 263-408 are coil 2; the sequence is SALREIRAQY…LLEGEETRFS (146 aa). At Lys290 the chain carries N6-acetyllysine. Phosphoserine is present on residues Ser335, Ser474, and Ser502. Residues 409 to 505 form a tail region; the sequence is TSGLSISGLN…EITTSSSQKM (97 aa). The disordered stretch occupies residues 438–505; the sequence is KVSSAGLSLK…EITTSSSQKM (68 aa). Low complexity predominate over residues 495-505; the sequence is EEITTSSSQKM.

The protein belongs to the intermediate filament family. Forms homodimers (in vitro). Forms heterodimers with NEFL, NEFM or NEFH (in vitro). In terms of processing, O-glycosylated. Expressed in the dorsal root ganglion neurons (at protein level).

In terms of biological role, class-IV neuronal intermediate filament that is able to self-assemble. It is involved in the morphogenesis of neurons. It may form an independent structural network without the involvement of other neurofilaments or it may cooperate with NEFL to form the filamentous backbone to which NEFM and NEFH attach to form the cross-bridges. May also cooperate with the neuronal intermediate filament protein PRPH to form filamentous networks. The polypeptide is Alpha-internexin (Ina) (Rattus norvegicus (Rat)).